A 642-amino-acid polypeptide reads, in one-letter code: UvrABC system protein C (642 aa).

The GIY-YIG domain maps to 20-97 (ERCGVYRMFD…IKKFQPKFNI (78 aa)). A UVR domain is found at 207–242 (KELQENLSKKMEELSSQMRFEEAAEIRDRIKALSYV).

It belongs to the UvrC family. As to quaternary structure, interacts with UvrB in an incision complex.

The protein localises to the cytoplasm. Functionally, the UvrABC repair system catalyzes the recognition and processing of DNA lesions. UvrC both incises the 5' and 3' sides of the lesion. The N-terminal half is responsible for the 3' incision and the C-terminal half is responsible for the 5' incision. This is UvrABC system protein C from Rickettsia felis (strain ATCC VR-1525 / URRWXCal2) (Rickettsia azadi).